The chain runs to 287 residues: 2-dehydro-3-deoxyphosphooctonate aldolase (287 aa).

This sequence belongs to the KdsA family.

Its subcellular location is the cytoplasm. The enzyme catalyses D-arabinose 5-phosphate + phosphoenolpyruvate + H2O = 3-deoxy-alpha-D-manno-2-octulosonate-8-phosphate + phosphate. The protein operates within carbohydrate biosynthesis; 3-deoxy-D-manno-octulosonate biosynthesis; 3-deoxy-D-manno-octulosonate from D-ribulose 5-phosphate: step 2/3. It functions in the pathway bacterial outer membrane biogenesis; lipopolysaccharide biosynthesis. This Rhodopseudomonas palustris (strain HaA2) protein is 2-dehydro-3-deoxyphosphooctonate aldolase.